A 714-amino-acid polypeptide reads, in one-letter code: ATP-dependent DNA helicase DinG (714 aa).

The Helicase ATP-binding domain occupies 17–294 (ALQDQIPDFI…TCMEQFRPKT (278 aa)). Position 54–61 (54–61 (APTGVGKT)) interacts with ATP. Residues cysteine 120, cysteine 194, cysteine 199, and cysteine 205 each contribute to the [4Fe-4S] cluster site. Residues 248–251 (DEGH) carry the DEAH box motif. Residues 517–698 (HIAEMAAYFR…VFPIEQPAVP (182 aa)) form the Helicase C-terminal domain.

It belongs to the helicase family. DinG subfamily. Type 1 sub-subfamily. [4Fe-4S] cluster serves as cofactor.

The enzyme catalyses Couples ATP hydrolysis with the unwinding of duplex DNA at the replication fork by translocating in the 5'-3' direction. This creates two antiparallel DNA single strands (ssDNA). The leading ssDNA polymer is the template for DNA polymerase III holoenzyme which synthesizes a continuous strand.. It carries out the reaction ATP + H2O = ADP + phosphate + H(+). Its function is as follows. DNA-dependent ATPase and 5'-3' DNA helicase. Unwinds D-loops, R-loops, forked DNA and G-quadruplex DNA. This chain is ATP-dependent DNA helicase DinG, found in Salmonella paratyphi A (strain ATCC 9150 / SARB42).